Consider the following 51-residue polypeptide: Putative protein LomR (51 aa).

Belongs to the outer membrane OOP (TC 1.B.6) superfamily. Ail family.

This is Putative protein LomR (lomR) from Escherichia coli (strain K12).